The chain runs to 842 residues: Cullin-8 (842 aa).

A required for interaction with MMS1 region spans residues Met-1–Phe-50. Residues Leu-755 to Thr-765 are compositionally biased toward polar residues. The interval Leu-755–Ser-775 is disordered. Lys-791 is covalently cross-linked (Glycyl lysine isopeptide (Lys-Gly) (interchain with G-Cter in NEDD8)).

It belongs to the cullin family. Component of multiple cullin-RING ligases (CRLs) composed of 4 subunits: the RING protein HRT1, the cullin RTT101, a linker protein MMS1, and one of many alternative substrate receptors belonging to a protein family described as DCAF (DDB1- and CUL4-associated factor). Component of a RTT101(MMS1-MMS22) complex with the substrate receptor MMS22. This complex further interacts with RTT107 and CTF4 to form RTT101-MMS1-MMS22-RTT107 and RTT101-MMS1-MMS22-CTF4 complexes respectively. Component of a RTT101(MSS1-CRT10) complex with the substrate receptor CRT10. Component of a RTT101(MSS1-ESC2) complex with the potential substrate receptor ESC2. Component of a RTT101(MSS1-ORC5) complex with the potential substrate receptor ORC5. Interacts (via C-ter) with HRT1; required for ubiquitin-ligase activity. Interacts (via N-ter) with MMS1. In terms of processing, neddylated. HRT1-binding is necessary for RUB1/NEDD8 modification of RTT101. The modification enhances ubiquitin-ligase activity.

The protein localises to the cytoplasm. Its subcellular location is the nucleus. The protein operates within protein modification; protein ubiquitination. Its function is as follows. Core component of multiple cullin-RING-based E3 ubiquitin-protein ligase complexes (CRLs), which mediate the ubiquitination of target proteins. As a scaffold protein may contribute to catalysis through positioning of the substrate and the ubiquitin-conjugating enzyme. The CRL associates with CDC34 as the E2 ubiquitin-conjugating enzyme. The functional specificity of the CRL depends on the type of the associated substrate receptor protein. RTT101(MMS1-MMS22) promotes fork progression through damaged DNA or natural pause sites by stabilizing replication proteins like the replication fork-pausing complex (FPC) and leading-strand polymerase at stalled replication forks. RTT101(MMS1-MMS22) ubiquitinates the acetylated histones H3K56ac-H4 at lysine residues H3K121, H3K122 and H3K125. Ubiquitination is required for efficient histone deposition during replication-coupled nucleosome assembly, probably by facilitating the transfer of H3-H4 from ASF1 to other chaperones involved in histone deposition. RTT101(MMS1-CRT10) may regulate nucleotide synthesis through transcriptional regulation of ribonucleotide reductase. RTT101(MMS1) is also involved in the non-functional rRNA decay (NRD) of 25S rRNA through the selective, ubiquitination-dependent degradation of nonfunctional ribosomal particles. Ubiquitinates the FACT (facilitates chromatin transcription) complex subunit SPT16 in an MMS1-independent manner. Involved in regulation of Ty1 transposition and protects the genome from Ty1 integration upstream of tRNA genes. The chain is Cullin-8 (RTT101) from Saccharomyces cerevisiae (strain ATCC 204508 / S288c) (Baker's yeast).